Here is a 167-residue protein sequence, read N- to C-terminus: MLPMITGFMNYGQQTLRAARYIGQGFMITLSHTNRLPVTIQYPYEKLITSERFRGRIHFEFDKCIACEVCVRVCPIDLPVVDWKLETPIRKKRLLNYSIDFGICIFCGNCVEYCPTNCLSMTEEYEFSTYDRHELNYNQIALGRLPISVIDDYTIRTILNSPQIKNG.

4Fe-4S ferredoxin-type domains are found at residues 55 to 84 and 95 to 124; these read GRIH…VDWK and LNYS…MTEE. Residues C64, C67, C70, C74, C104, C107, C110, and C114 each contribute to the [4Fe-4S] cluster site.

Belongs to the complex I 23 kDa subunit family. NDH is composed of at least 16 different subunits, 5 of which are encoded in the nucleus. Requires [4Fe-4S] cluster as cofactor.

Its subcellular location is the plastid. It is found in the chloroplast thylakoid membrane. The catalysed reaction is a plastoquinone + NADH + (n+1) H(+)(in) = a plastoquinol + NAD(+) + n H(+)(out). It carries out the reaction a plastoquinone + NADPH + (n+1) H(+)(in) = a plastoquinol + NADP(+) + n H(+)(out). Functionally, NDH shuttles electrons from NAD(P)H:plastoquinone, via FMN and iron-sulfur (Fe-S) centers, to quinones in the photosynthetic chain and possibly in a chloroplast respiratory chain. The immediate electron acceptor for the enzyme in this species is believed to be plastoquinone. Couples the redox reaction to proton translocation, and thus conserves the redox energy in a proton gradient. The protein is NAD(P)H-quinone oxidoreductase subunit I, chloroplastic of Aethionema cordifolium (Lebanon stonecress).